The primary structure comprises 364 residues: Acidic fibroblast growth factor intracellular-binding protein (364 aa).

Thr2 is modified (N-acetylthreonine).

In terms of assembly, binds to internalized FGF1; this interaction is increased in the presence of CSNKB, suggesting a possible cooperative interaction between CSNKB and FIBP in binding to FGF1. As to expression, highly expressed in heart, skeletal muscle and pancreas. Expressed at lower levels in brain. Also found in placenta, liver and kidney.

The protein resides in the nucleus. Its subcellular location is the endomembrane system. May be involved in mitogenic function of FGF1. May mediate with IER2 FGF-signaling in the establishment of laterality in the embryo. This Homo sapiens (Human) protein is Acidic fibroblast growth factor intracellular-binding protein (FIBP).